Consider the following 142-residue polypeptide: DNA-directed RNA polymerase subunit omega (142 aa).

The tract at residues 93-142 is disordered; that stretch reads AWSVPEAGGDEGGDASELLDDEGEGAAAGAEPDFSEMDVPLADLADEDKI. Over residues 100 to 116 the composition is skewed to acidic residues; it reads GGDEGGDASELLDDEGE.

Belongs to the RNA polymerase subunit omega family. In terms of assembly, the RNAP catalytic core consists of 2 alpha, 1 beta, 1 beta' and 1 omega subunit. When a sigma factor is associated with the core the holoenzyme is formed, which can initiate transcription.

The catalysed reaction is RNA(n) + a ribonucleoside 5'-triphosphate = RNA(n+1) + diphosphate. Its function is as follows. Promotes RNA polymerase assembly. Latches the N- and C-terminal regions of the beta' subunit thereby facilitating its interaction with the beta and alpha subunits. The protein is DNA-directed RNA polymerase subunit omega of Rhodospirillum centenum (strain ATCC 51521 / SW).